The following is a 489-amino-acid chain: Probable cytochrome P450 522A1 (489 aa).

Residues 1 to 21 (MILTIVIIILTVIFVNKYLLN) form a helical membrane-spanning segment. Position 433 (C433) interacts with heme.

Belongs to the cytochrome P450 family. The cofactor is heme.

The protein localises to the membrane. This is Probable cytochrome P450 522A1 (cyp522A1) from Dictyostelium discoideum (Social amoeba).